The sequence spans 400 residues: MSENILQDLEMVTCTAPVNIAVIKYWGKRDEDLILPVNASLSVTLHQDHLRTTTTIACSRSFHKDCIWLNGKEQDISHPRLQSCLLEIRRLAQRRKNTGDPASDVSNKVHICSVNNFPTAAGLASSAAGYACLVYTLSQLFNVEGELSGVARQGSGSACRSLYGGFVQWKLGEQSDGKDSIAEQVASELYWPELRVLILVVSAEQKSVGSTSGMHTSVETSHLLKYRADAVVPGRMEEMIRAIRLRDFPKFGELTMKDSNQFHAICLDTYPPIFYLNNISHQIISLVHRYNQYYGETRVAYTFDAGPNAVIYSLQDYLPEFVEVVRHFFPPEVNEEEFFKGLPVCPADLSEEMIRDINMKPTPNGIRYMISTKAGPGPRVVEDPNLHLLGADGLPKKSAV.

Residues 25–28, Arg-80, 155–160, and Thr-211 each bind (R)-5-diphosphomevalonate; these read YWGK and SGSACR.

It belongs to the diphosphomevalonate decarboxylase family. In terms of assembly, homodimer.

The protein resides in the cytoplasm. It catalyses the reaction (R)-5-diphosphomevalonate + ATP = isopentenyl diphosphate + ADP + phosphate + CO2. The protein operates within steroid biosynthesis; cholesterol biosynthesis. Functionally, catalyzes the ATP dependent decarboxylation of (R)-5-diphosphomevalonate to form isopentenyl diphosphate (IPP). Functions in the mevalonate (MVA) pathway leading to isopentenyl diphosphate (IPP), a key precursor for the biosynthesis of isoprenoids and sterol synthesis. The sequence is that of Diphosphomevalonate decarboxylase (mvd) from Danio rerio (Zebrafish).